Consider the following 109-residue polypeptide: Large ribosomal subunit protein uL24 (109 aa).

The protein belongs to the universal ribosomal protein uL24 family. As to quaternary structure, part of the 50S ribosomal subunit.

Functionally, one of two assembly initiator proteins, it binds directly to the 5'-end of the 23S rRNA, where it nucleates assembly of the 50S subunit. In terms of biological role, one of the proteins that surrounds the polypeptide exit tunnel on the outside of the subunit. In Hamiltonella defensa subsp. Acyrthosiphon pisum (strain 5AT), this protein is Large ribosomal subunit protein uL24.